Here is a 377-residue protein sequence, read N- to C-terminus: Nitric oxide reductase FlRd-NAD(+) reductase (377 aa).

The protein belongs to the FAD-dependent oxidoreductase family. Requires FAD as cofactor.

It is found in the cytoplasm. The enzyme catalyses 2 reduced [nitric oxide reductase rubredoxin domain] + NAD(+) + H(+) = 2 oxidized [nitric oxide reductase rubredoxin domain] + NADH. Its pathway is nitrogen metabolism; nitric oxide reduction. One of at least two accessory proteins for anaerobic nitric oxide (NO) reductase. Reduces the rubredoxin moiety of NO reductase. The protein is Nitric oxide reductase FlRd-NAD(+) reductase of Escherichia coli (strain SMS-3-5 / SECEC).